The primary structure comprises 219 residues: MTKGILGRKIGMTQVFGENGDLIPVTVVEASQNVILQKKSEEIDGYNAIQVGYEDKQAYKKDSRSSKYANKPAEGHAKKAGTAPKRFIREFRNVNVDEYEVGQEVSVNTFEAGDVIDVTGVSKGKGFQGAIKRHNQARGPMSHGSHFHRAPGSVGMASDASRVFKGQKMPGRMGGNTVTVQNLEVVQIDAENNVILVKGNVPGPKKGFVEITSSIKGNK.

Disordered regions lie at residues 62-81 and 136-156; these read DSRS…KKAG and QARG…SVGM.

Belongs to the universal ribosomal protein uL3 family. In terms of assembly, part of the 50S ribosomal subunit. Forms a cluster with proteins L14 and L19.

Functionally, one of the primary rRNA binding proteins, it binds directly near the 3'-end of the 23S rRNA, where it nucleates assembly of the 50S subunit. This chain is Large ribosomal subunit protein uL3, found in Staphylococcus saprophyticus subsp. saprophyticus (strain ATCC 15305 / DSM 20229 / NCIMB 8711 / NCTC 7292 / S-41).